A 221-amino-acid polypeptide reads, in one-letter code: Phosphoglycolate phosphatase (221 aa).

Asp-10 acts as the Nucleophile in catalysis. Residues Asp-10, Asp-12, and Asp-168 each coordinate Mg(2+).

The protein belongs to the HAD-like hydrolase superfamily. CbbY/CbbZ/Gph/YieH family. It depends on Mg(2+) as a cofactor.

It carries out the reaction 2-phosphoglycolate + H2O = glycolate + phosphate. It participates in organic acid metabolism; glycolate biosynthesis; glycolate from 2-phosphoglycolate: step 1/1. Functionally, specifically catalyzes the dephosphorylation of 2-phosphoglycolate. Is involved in the dissimilation of the intracellular 2-phosphoglycolate formed during the DNA repair of 3'-phosphoglycolate ends, a major class of DNA lesions induced by oxidative stress. This Xanthomonas campestris pv. campestris (strain 8004) protein is Phosphoglycolate phosphatase.